The chain runs to 389 residues: Na(+)/H(+) antiporter NhaA (389 aa).

Transmembrane regions (helical) follow at residues 14–34 (AGGILLLVAVALAMLMANSPL), 59–79 (LILWINDGLMAVFFLLIGLEV), 95–115 (SLPTFAAIGGMLVPAGVYLLF), 124–144 (AGWAIPAATDIAFALGIMALL), 154–174 (VFLLALAIIDDLGVIVIIALF), 177–197 (TDLSTISLVIASLAIAGLVGL), 213–233 (LILWVAVLKSGVHATLAGVII), 257–277 (PWSTFFILPVFAFANAGVYVG), 292–312 (IALGLMLGKPIGVMVFSYIAV), 328–348 (IAPVAAMCGIGFTMSMFIASL), and 363–383 (LGTLIGSIMAALVGYFWLSKV).

The protein belongs to the NhaA Na(+)/H(+) (TC 2.A.33) antiporter family.

The protein resides in the cell inner membrane. It carries out the reaction Na(+)(in) + 2 H(+)(out) = Na(+)(out) + 2 H(+)(in). Functionally, na(+)/H(+) antiporter that extrudes sodium in exchange for external protons. The sequence is that of Na(+)/H(+) antiporter NhaA from Shewanella baltica (strain OS155 / ATCC BAA-1091).